A 750-amino-acid polypeptide reads, in one-letter code: Photosystem I P700 chlorophyll a apoprotein A1 (750 aa).

8 consecutive transmembrane segments (helical) span residues 70 to 93 (VFSAHFGQLSIIFLWLSGMYFHGA), 156 to 179 (LYCTAIGALIFAALMLFAGWFHYH), 195 to 219 (LNHHLAGLLGLGSLSWAGHQVHVSL), 291 to 309 (IAHHHLAIAILFLIAGHMY), 346 to 369 (WHAQLSLNLAMLGSLTIIVAHHMY), 385 to 411 (LSLFTHHMWIGGFLIVGAAAHAAIFMV), 433 to 455 (AIISHLNWVCIFLGFHSFGLYIH), and 531 to 549 (FLVHHIHAFTIHVTVLILL). Residues Cys573 and Cys582 each contribute to the [4Fe-4S] cluster site. A run of 2 helical transmembrane segments spans residues 589–610 (HVFLGLFWMYNAISVVIFHFSW) and 664–686 (LSAYGLFFLGAHFVWAFSLMFLF). Residue His675 participates in chlorophyll a' binding. Chlorophyll a-binding residues include Met683 and Tyr691. Trp692 contacts phylloquinone. A helical transmembrane segment spans residues 724–744 (AVGVTHYLLGGIATTWAFFLA).

Belongs to the PsaA/PsaB family. The PsaA/B heterodimer binds the P700 chlorophyll special pair and subsequent electron acceptors. PSI consists of a core antenna complex that captures photons, and an electron transfer chain that converts photonic excitation into a charge separation. The eukaryotic PSI reaction center is composed of at least 11 subunits. P700 is a chlorophyll a/chlorophyll a' dimer, A0 is one or more chlorophyll a, A1 is one or both phylloquinones and FX is a shared 4Fe-4S iron-sulfur center. is required as a cofactor.

The protein resides in the plastid. Its subcellular location is the chloroplast thylakoid membrane. The catalysed reaction is reduced [plastocyanin] + hnu + oxidized [2Fe-2S]-[ferredoxin] = oxidized [plastocyanin] + reduced [2Fe-2S]-[ferredoxin]. Its function is as follows. PsaA and PsaB bind P700, the primary electron donor of photosystem I (PSI), as well as the electron acceptors A0, A1 and FX. PSI is a plastocyanin-ferredoxin oxidoreductase, converting photonic excitation into a charge separation, which transfers an electron from the donor P700 chlorophyll pair to the spectroscopically characterized acceptors A0, A1, FX, FA and FB in turn. Oxidized P700 is reduced on the lumenal side of the thylakoid membrane by plastocyanin. The chain is Photosystem I P700 chlorophyll a apoprotein A1 from Citrus sinensis (Sweet orange).